Here is a 387-residue protein sequence, read N- to C-terminus: 1-deoxy-D-xylulose 5-phosphate reductoisomerase (387 aa).

8 residues coordinate NADPH: T11, G12, S13, I14, G37, R38, N39, and N125. K126 lines the 1-deoxy-D-xylulose 5-phosphate pocket. E127 provides a ligand contact to NADPH. Position 151 (D151) interacts with Mn(2+). 1-deoxy-D-xylulose 5-phosphate contacts are provided by S152, E153, S177, and H200. A Mn(2+)-binding site is contributed by E153. G206 serves as a coordination point for NADPH. Residues S213, N218, K219, and E222 each coordinate 1-deoxy-D-xylulose 5-phosphate. Mn(2+) is bound at residue E222.

The protein belongs to the DXR family. It depends on Mg(2+) as a cofactor. Requires Mn(2+) as cofactor.

It carries out the reaction 2-C-methyl-D-erythritol 4-phosphate + NADP(+) = 1-deoxy-D-xylulose 5-phosphate + NADPH + H(+). It functions in the pathway isoprenoid biosynthesis; isopentenyl diphosphate biosynthesis via DXP pathway; isopentenyl diphosphate from 1-deoxy-D-xylulose 5-phosphate: step 1/6. Its function is as follows. Catalyzes the NADPH-dependent rearrangement and reduction of 1-deoxy-D-xylulose-5-phosphate (DXP) to 2-C-methyl-D-erythritol 4-phosphate (MEP). The sequence is that of 1-deoxy-D-xylulose 5-phosphate reductoisomerase from Desulforamulus reducens (strain ATCC BAA-1160 / DSM 100696 / MI-1) (Desulfotomaculum reducens).